The primary structure comprises 296 residues: tRNA dimethylallyltransferase (296 aa).

Residue 9-16 (GPTAVGKT) coordinates ATP. 11-16 (TAVGKT) provides a ligand contact to substrate. The segment at 34 to 37 (DSRQ) is interaction with substrate tRNA.

This sequence belongs to the IPP transferase family. In terms of assembly, monomer. Requires Mg(2+) as cofactor.

It carries out the reaction adenosine(37) in tRNA + dimethylallyl diphosphate = N(6)-dimethylallyladenosine(37) in tRNA + diphosphate. Catalyzes the transfer of a dimethylallyl group onto the adenine at position 37 in tRNAs that read codons beginning with uridine, leading to the formation of N6-(dimethylallyl)adenosine (i(6)A). This Chloroflexus aurantiacus (strain ATCC 29366 / DSM 635 / J-10-fl) protein is tRNA dimethylallyltransferase.